Reading from the N-terminus, the 288-residue chain is Polyamine aminopropyltransferase (288 aa).

The PABS domain occupies 9–238 (ETLHDQFGQY…GIMTFAWATD (230 aa)). Gln-33 contacts S-methyl-5'-thioadenosine. Residues His-64 and Asp-88 each contribute to the spermidine site. S-methyl-5'-thioadenosine contacts are provided by residues Glu-108 and 140–141 (DG). The active-site Proton acceptor is Asp-158. 158-161 (DCTD) provides a ligand contact to spermidine. Pro-165 serves as a coordination point for S-methyl-5'-thioadenosine.

Belongs to the spermidine/spermine synthase family. Homodimer or homotetramer.

It localises to the cytoplasm. The enzyme catalyses S-adenosyl 3-(methylsulfanyl)propylamine + putrescine = S-methyl-5'-thioadenosine + spermidine + H(+). The protein operates within amine and polyamine biosynthesis; spermidine biosynthesis; spermidine from putrescine: step 1/1. Catalyzes the irreversible transfer of a propylamine group from the amino donor S-adenosylmethioninamine (decarboxy-AdoMet) to putrescine (1,4-diaminobutane) to yield spermidine. This Shigella sonnei (strain Ss046) protein is Polyamine aminopropyltransferase.